We begin with the raw amino-acid sequence, 619 residues long: DBH-like monooxygenase protein 2 (619 aa).

The first 21 residues, 1-21, serve as a signal peptide directing secretion; sequence MACVLLFRLFLLLVLAAFSQG. The Extracellular portion of the chain corresponds to 22–594; the sequence is KRLGPTSPLR…LSGSNTATLR (573 aa). The DOMON domain occupies 40 to 156; the sequence is RAVFLRWDFD…DTMRVLAAYG (117 aa). Residue Tyr-209 is part of the active site. 2 disulfides stabilise this stretch: Cys-211-Cys-261 and Cys-248-Cys-271. 2 residues coordinate Cu cation: His-241 and His-242. Asn-250 carries an N-linked (GlcNAc...) asparagine glycan. Cu cation contacts are provided by His-309, His-390, and His-392. 2 cysteine pairs are disulfide-bonded: Cys-366–Cys-481 and Cys-444–Cys-466. His-390 is an active-site residue. Asn-405 carries an N-linked (GlcNAc...) asparagine glycan. Met-465 contacts Cu cation. N-linked (GlcNAc...) asparagine glycosylation is present at Asn-477. Residues 595–615 traverse the membrane as a helical segment; the sequence is PLPMIAVLFLQGSLSCLLAML. Topologically, residues 616–619 are cytoplasmic; sequence QTGV.

Belongs to the copper type II ascorbate-dependent monooxygenase family. The cofactor is Cu(2+). In terms of tissue distribution, expressed at low levels in thymus and testis.

The protein resides in the membrane. The sequence is that of DBH-like monooxygenase protein 2 (Moxd2) from Mus musculus (Mouse).